The sequence spans 480 residues: Aspartyl/glutamyl-tRNA(Asn/Gln) amidotransferase subunit B (480 aa).

Belongs to the GatB/GatE family. GatB subfamily. In terms of assembly, heterotrimer of A, B and C subunits.

The catalysed reaction is L-glutamyl-tRNA(Gln) + L-glutamine + ATP + H2O = L-glutaminyl-tRNA(Gln) + L-glutamate + ADP + phosphate + H(+). It carries out the reaction L-aspartyl-tRNA(Asn) + L-glutamine + ATP + H2O = L-asparaginyl-tRNA(Asn) + L-glutamate + ADP + phosphate + 2 H(+). In terms of biological role, allows the formation of correctly charged Asn-tRNA(Asn) or Gln-tRNA(Gln) through the transamidation of misacylated Asp-tRNA(Asn) or Glu-tRNA(Gln) in organisms which lack either or both of asparaginyl-tRNA or glutaminyl-tRNA synthetases. The reaction takes place in the presence of glutamine and ATP through an activated phospho-Asp-tRNA(Asn) or phospho-Glu-tRNA(Gln). The sequence is that of Aspartyl/glutamyl-tRNA(Asn/Gln) amidotransferase subunit B from Streptococcus pneumoniae (strain CGSP14).